The sequence spans 384 residues: 23S rRNA (uracil(747)-C(5))-methyltransferase RlmC (384 aa).

4 residues coordinate [4Fe-4S] cluster: C7, C15, C18, and C94. S-adenosyl-L-methionine-binding residues include Q219, F248, E269, and N316. C343 serves as the catalytic Nucleophile.

This sequence belongs to the class I-like SAM-binding methyltransferase superfamily. RNA M5U methyltransferase family. RlmC subfamily.

It catalyses the reaction uridine(747) in 23S rRNA + S-adenosyl-L-methionine = 5-methyluridine(747) in 23S rRNA + S-adenosyl-L-homocysteine + H(+). Functionally, catalyzes the formation of 5-methyl-uridine at position 747 (m5U747) in 23S rRNA. This Shewanella sp. (strain ANA-3) protein is 23S rRNA (uracil(747)-C(5))-methyltransferase RlmC.